Reading from the N-terminus, the 354-residue chain is Uroporphyrinogen decarboxylase (354 aa).

Residues R27–R31, D77, Y154, T209, and H327 contribute to the substrate site.

It belongs to the uroporphyrinogen decarboxylase family. In terms of assembly, homodimer.

Its subcellular location is the cytoplasm. The enzyme catalyses uroporphyrinogen III + 4 H(+) = coproporphyrinogen III + 4 CO2. The protein operates within porphyrin-containing compound metabolism; protoporphyrin-IX biosynthesis; coproporphyrinogen-III from 5-aminolevulinate: step 4/4. Its function is as follows. Catalyzes the decarboxylation of four acetate groups of uroporphyrinogen-III to yield coproporphyrinogen-III. This Salmonella heidelberg (strain SL476) protein is Uroporphyrinogen decarboxylase.